A 352-amino-acid chain; its full sequence is Glycerol-3-phosphate dehydrogenase [NAD(P)+] (352 aa).

4 residues coordinate NADPH: Ser-11, Trp-12, Arg-32, and Lys-105. The sn-glycerol 3-phosphate site is built by Lys-105, Gly-133, and Ser-135. Residue Ala-137 coordinates NADPH. Lys-188, Asp-241, Ser-251, Arg-252, and Asn-253 together coordinate sn-glycerol 3-phosphate. Lys-188 serves as the catalytic Proton acceptor. Arg-252 serves as a coordination point for NADPH. Residues Val-276 and Glu-278 each coordinate NADPH.

This sequence belongs to the NAD-dependent glycerol-3-phosphate dehydrogenase family.

Its subcellular location is the cytoplasm. The enzyme catalyses sn-glycerol 3-phosphate + NAD(+) = dihydroxyacetone phosphate + NADH + H(+). It carries out the reaction sn-glycerol 3-phosphate + NADP(+) = dihydroxyacetone phosphate + NADPH + H(+). It functions in the pathway membrane lipid metabolism; glycerophospholipid metabolism. In terms of biological role, catalyzes the reduction of the glycolytic intermediate dihydroxyacetone phosphate (DHAP) to sn-glycerol 3-phosphate (G3P), the key precursor for phospholipid synthesis. The chain is Glycerol-3-phosphate dehydrogenase [NAD(P)+] from Desulfitobacterium hafniense (strain Y51).